A 918-amino-acid polypeptide reads, in one-letter code: Isoleucine--tRNA ligase (918 aa).

The short motif at 57 to 67 (PYANGHIHIGT) is the 'HIGH' region element. Glu-552 serves as a coordination point for L-isoleucyl-5'-AMP. A 'KMSKS' region motif is present at residues 593 to 597 (KMSKS). An ATP-binding site is contributed by Lys-596. Residues Cys-886, Cys-889, Cys-906, and Cys-909 each coordinate Zn(2+).

This sequence belongs to the class-I aminoacyl-tRNA synthetase family. IleS type 1 subfamily. In terms of assembly, monomer. The cofactor is Zn(2+).

The protein resides in the cytoplasm. It catalyses the reaction tRNA(Ile) + L-isoleucine + ATP = L-isoleucyl-tRNA(Ile) + AMP + diphosphate. Catalyzes the attachment of isoleucine to tRNA(Ile). As IleRS can inadvertently accommodate and process structurally similar amino acids such as valine, to avoid such errors it has two additional distinct tRNA(Ile)-dependent editing activities. One activity is designated as 'pretransfer' editing and involves the hydrolysis of activated Val-AMP. The other activity is designated 'posttransfer' editing and involves deacylation of mischarged Val-tRNA(Ile). In Thermotoga neapolitana (strain ATCC 49049 / DSM 4359 / NBRC 107923 / NS-E), this protein is Isoleucine--tRNA ligase.